Here is a 43-residue protein sequence, read N- to C-terminus: Protein PsbN (43 aa).

A helical membrane pass occupies residues 7–27; the sequence is FVVGILVALVLITAFAVYTAF.

The protein belongs to the PsbN family.

The protein resides in the cell inner membrane. In terms of biological role, may play a role in photosystem I and II biogenesis. The polypeptide is Protein PsbN (Gloeobacter violaceus (strain ATCC 29082 / PCC 7421)).